A 1017-amino-acid chain; its full sequence is Rho-GTPase-activating protein LRG1 (1017 aa).

M1 carries the N-acetylmethionine modification. 2 LIM zinc-binding domains span residues 28 to 88 (CARC…LCQY) and 98 to 148 (CHVC…CKYH). In terms of domain architecture, LIM zinc-binding 3; truncated spans 155-184 (KRCKGCEFPISDQYIEFPKGEEIHCWHPEC). The LIM zinc-binding 4 domain occupies 419–474 (CAGCNKYIQEECIQFYEHRWHIACFTCSSCHKNINPRSLTDPTFNKEKKKILCSHC). Phosphoserine is present on S562. Residues 570-602 (TDLNDPTKQGDSKNLVIQTDDPSSSQQVSTREN) form a disordered region. The segment covering 584-602 (LVIQTDDPSSSQQVSTREN) has biased composition (polar residues). Positions 730 to 953 (APLDVLCEKW…YLITHNEEMA (224 aa)) constitute a Rho-GAP domain.

As to quaternary structure, interacts with CDC42, RHO1 and RHO2.

Its subcellular location is the cytoplasm. The protein resides in the bud. The protein localises to the bud neck. Functionally, acts in signal transduction. Activates CDC42, RHO1 and RHO2. Negatively regulates 1,3-beta-glucan synthesis. May be responsible for the down-regulation of CDC42 during mating. This is Rho-GTPase-activating protein LRG1 (LRG1) from Saccharomyces cerevisiae (strain ATCC 204508 / S288c) (Baker's yeast).